We begin with the raw amino-acid sequence, 440 residues long: C4-dicarboxylate transport protein (440 aa).

8 consecutive transmembrane segments (helical) span residues 8 to 28 (LYLQ…LFPA), 40 to 60 (FIKL…VTGI), 74 to 94 (LKGL…GLVV), 147 to 167 (GDIL…AALK), 187 to 207 (IVGF…AFTV), 221 to 241 (LIAC…GLVL), 288 to 308 (VVGL…SIYL), and 354 to 374 (AATL…LLGV). Residues 419-440 (DEVEPANDPEPPAMAAGLGLHG) are disordered.

Belongs to the dicarboxylate/amino acid:cation symporter (DAACS) (TC 2.A.23) family.

Its subcellular location is the cell inner membrane. Its function is as follows. Responsible for the transport of dicarboxylates such as succinate, fumarate, and malate from the periplasm across the membrane. This chain is C4-dicarboxylate transport protein, found in Anaeromyxobacter dehalogenans (strain 2CP-C).